The chain runs to 240 residues: Ubiquinone biosynthesis O-methyltransferase (240 aa).

S-adenosyl-L-methionine-binding residues include Arg-44, Gly-64, Asp-85, and Met-129.

This sequence belongs to the methyltransferase superfamily. UbiG/COQ3 family.

The catalysed reaction is a 3-demethylubiquinol + S-adenosyl-L-methionine = a ubiquinol + S-adenosyl-L-homocysteine + H(+). The enzyme catalyses a 3-(all-trans-polyprenyl)benzene-1,2-diol + S-adenosyl-L-methionine = a 2-methoxy-6-(all-trans-polyprenyl)phenol + S-adenosyl-L-homocysteine + H(+). It participates in cofactor biosynthesis; ubiquinone biosynthesis. O-methyltransferase that catalyzes the 2 O-methylation steps in the ubiquinone biosynthetic pathway. The protein is Ubiquinone biosynthesis O-methyltransferase of Escherichia coli O7:K1 (strain IAI39 / ExPEC).